Here is a 644-residue protein sequence, read N- to C-terminus: Ribonuclease R (644 aa).

Positions arginine 211–phenylalanine 529 constitute an RNB domain. The S1 motif domain occupies leucine 573–serine 644.

This sequence belongs to the RNR ribonuclease family. RNase R subfamily.

Its subcellular location is the cytoplasm. It catalyses the reaction Exonucleolytic cleavage in the 3'- to 5'-direction to yield nucleoside 5'-phosphates.. Functionally, 3'-5' exoribonuclease that releases 5'-nucleoside monophosphates and is involved in maturation of structured RNAs. This Helicobacter pylori (strain ATCC 700392 / 26695) (Campylobacter pylori) protein is Ribonuclease R.